Here is a 503-residue protein sequence, read N- to C-terminus: Splicing factor 3A subunit 3 (503 aa).

2 disordered regions span residues 296 to 317 (PALM…EHER) and 341 to 384 (ATKE…NPKN). Acidic residues predominate over residues 358–377 (DDSDVEASESDNEDDPDADD). Phosphoserine is present on residues Ser-360, Ser-365, and Ser-367. Residues 408–439 (YNCEICGNFTYKGPKAFQRHFAEWRHAHGMRC) form a Matrin-type zinc finger.

The protein belongs to the SF3A3 family. Probable component of a the U2 small nuclear ribonucleoproteins complex (U2 snRNP). Ubiquitous. In ovaries and testes, it is expressed in all germ and somatic cells. Highly expressed in spermatogonias and spermatocytes. Highly expressed in the germ cells of larval testes, while it is weakly expressed in fat body cells, in polyploid nuclei of salivary glands, and in larval brain.

Its subcellular location is the nucleus. Probable subunit of a splicing factor complex required for 'A' complex assembly formed by the stable binding of U2 snRNP to the branchpoint sequence (BPS) in pre-mRNA. Involved in male fertility. This chain is Splicing factor 3A subunit 3 (noi), found in Drosophila melanogaster (Fruit fly).